We begin with the raw amino-acid sequence, 285 residues long: Bifunctional protein FolD (285 aa).

NADP(+) contacts are provided by residues 166–168 and Ile-232; that span reads GAS.

It belongs to the tetrahydrofolate dehydrogenase/cyclohydrolase family. In terms of assembly, homodimer.

It carries out the reaction (6R)-5,10-methylene-5,6,7,8-tetrahydrofolate + NADP(+) = (6R)-5,10-methenyltetrahydrofolate + NADPH. The catalysed reaction is (6R)-5,10-methenyltetrahydrofolate + H2O = (6R)-10-formyltetrahydrofolate + H(+). The protein operates within one-carbon metabolism; tetrahydrofolate interconversion. Its activity is regulated as follows. The NAD(+)-dependent dehydrogenase is activated by inorganic phosphate. In terms of biological role, catalyzes the oxidation of 5,10-methylenetetrahydrofolate to 5,10-methenyltetrahydrofolate and then the hydrolysis of 5,10-methenyltetrahydrofolate to 10-formyltetrahydrofolate. The sequence is that of Bifunctional protein FolD from Photobacterium phosphoreum.